The chain runs to 253 residues: uncharacterized protein (253 aa).

The N-terminal stretch at 1–15 (MNRVILFHFHFFKNA) is a signal peptide.

This is an uncharacterized protein from Archaeoglobus fulgidus (strain ATCC 49558 / DSM 4304 / JCM 9628 / NBRC 100126 / VC-16).